Here is a 119-residue protein sequence, read N- to C-terminus: Large ribosomal subunit protein uL18 (119 aa).

A disordered region spans residues 1 to 23 (MSQVDKAARRQKIKDRSRVSVQG).

It belongs to the universal ribosomal protein uL18 family. Part of the 50S ribosomal subunit; part of the 5S rRNA/L5/L18/L25 subcomplex. Contacts the 5S and 23S rRNAs.

Its function is as follows. This is one of the proteins that bind and probably mediate the attachment of the 5S RNA into the large ribosomal subunit, where it forms part of the central protuberance. In Chlorobium chlorochromatii (strain CaD3), this protein is Large ribosomal subunit protein uL18.